We begin with the raw amino-acid sequence, 168 residues long: Photosystem I assembly protein Ycf3 (168 aa).

TPR repeat units lie at residues 35–68, 72–105, and 120–153; these read AFAY…EMDP, SYIL…NPFL, and GEQA…TPGN.

Belongs to the Ycf3 family.

The protein localises to the plastid membrane. Functionally, essential for the assembly of the photosystem I (PSI) complex. May act as a chaperone-like factor to guide the assembly of the PSI subunits. The polypeptide is Photosystem I assembly protein Ycf3 (Cuscuta gronovii (Common dodder)).